A 453-amino-acid polypeptide reads, in one-letter code: Gamma-aminobutyric acid receptor subunit alpha-6 (453 aa).

Positions 1 to 19 (MASSLPWLCIILWLENALG) are cleaved as a signal peptide. The Extracellular portion of the chain corresponds to 20-243 (KLEVEGNFYS…FHLQRKMGYF (224 aa)). A glycan (N-linked (GlcNAc...) asparagine) is linked at Asn31. Arg84 is a binding site for 4-aminobutanoate. Asn128 and Asn141 each carry an N-linked (GlcNAc...) asparagine glycan. Thr147 serves as a coordination point for 4-aminobutanoate. Cysteines 156 and 170 form a disulfide. Residues 244-264 (MIQIYTPCIMTVILSQVSFWI) traverse the membrane as a helical segment. The Cytoplasmic portion of the chain corresponds to 265-270 (NKESVP). Residues 271–290 (ARTVFGITTVLTMTTLSISA) traverse the membrane as a helical segment. The Extracellular portion of the chain corresponds to 291–304 (RHSLPKVSYATAMD). A helical transmembrane segment spans residues 305–325 (WFIAVCFAFVFSALIEFAAVN). Residues 326-422 (YFTNLQTQKA…GTSKIDQYSR (97 aa)) lie on the Cytoplasmic side of the membrane. The residue at position 403 (Thr403) is a Phosphothreonine. A helical transmembrane segment spans residues 423-443 (ILFPVAFAGFNLVYWVVYLSK). The Extracellular portion of the chain corresponds to 444–453 (DTMEVSSSVE).

It belongs to the ligand-gated ion channel (TC 1.A.9) family. Gamma-aminobutyric acid receptor (TC 1.A.9.5) subfamily. GABRA6 sub-subfamily. As to quaternary structure, heteropentamer, formed by a combination of alpha (GABRA1-6), beta (GABRB1-3), gamma (GABRG1-3), delta (GABRD), epsilon (GABRE), rho (GABRR1-3), pi (GABRP) and theta (GABRQ) chains, each subunit exhibiting distinct physiological and pharmacological properties. Binds UBQLN1. Expressed in brain, in cerebellar granule cells.

It localises to the postsynaptic cell membrane. It is found in the cell membrane. It catalyses the reaction chloride(in) = chloride(out). Functionally, alpha subunit of the heteropentameric ligand-gated chloride channel gated by gamma-aminobutyric acid (GABA), a major inhibitory neurotransmitter in the brain. GABA-gated chloride channels, also named GABA(A) receptors (GABAAR), consist of five subunits arranged around a central pore and contain GABA active binding site(s) located at the alpha and beta subunit interface(s). When activated by GABA, GABAARs selectively allow the flow of chloride anions across the cell membrane down their electrochemical gradient. Alpha-6/GABRA6 subunits are found at both synaptic and extrasynaptic sites. Chloride influx into the postsynaptic neuron following GABAAR opening decreases the neuron ability to generate a new action potential, thereby reducing nerve transmission. Extrasynaptic alpha-6-containing receptors contribute to the tonic GABAergic inhibition. Alpha-6 subunits are also present on glutamatergic synapses. This Homo sapiens (Human) protein is Gamma-aminobutyric acid receptor subunit alpha-6.